A 181-amino-acid chain; its full sequence is Transmembrane protein 47 (181 aa).

A2 is subject to N-acetylalanine. Helical transmembrane passes span 21–41 (LVGL…VLSP), 83–103 (ALLL…LISI), 115–135 (VAVM…LYPI), and 152–172 (GYGL…LYCL).

It belongs to the TMEM47 family. Interacts with CTNNB1, CTNNA1, PRKCI, PARD6B. Interacts with FYB1. In terms of tissue distribution, expressed in podocytes (at protein level).

It is found in the membrane. The protein resides in the cell junction. It localises to the adherens junction. Regulates cell junction organization in epithelial cells. May play a role in the transition from adherens junction to tight junction assembly. May regulate F-actin polymerization required for tight junctional localization dynamics and affect the junctional localization of PARD6B. During podocyte differentiation may negatively regulate activity of FYN and subsequently the abundance of nephrin. The protein is Transmembrane protein 47 (Tmem47) of Mus musculus (Mouse).